A 138-amino-acid chain; its full sequence is MSFYYRRIVHFQDTDAAGVVYFVNVLAICHEAYEASLAAFDINLKVFFSNQEIAIPIIHANVDFRRPMFCGDELTIELMPKTWGDDEFEISYQVFLKEVGKKWAARASTKHVCIHPQSKSRQKLSDEIRRWLLSFQTF.

The active site involves D15.

This sequence belongs to the 4-hydroxybenzoyl-CoA thioesterase family. DHNA-CoA hydrolase subfamily.

The catalysed reaction is 1,4-dihydroxy-2-naphthoyl-CoA + H2O = 1,4-dihydroxy-2-naphthoate + CoA + H(+). It participates in cofactor biosynthesis; phylloquinone biosynthesis. It functions in the pathway quinol/quinone metabolism; 1,4-dihydroxy-2-naphthoate biosynthesis; 1,4-dihydroxy-2-naphthoate from chorismate: step 7/7. Catalyzes the hydrolysis of 1,4-dihydroxy-2-naphthoyl-CoA (DHNA-CoA) to 1,4-dihydroxy-2-naphthoate (DHNA), a reaction involved in phylloquinone (vitamin K1) biosynthesis. In Trichodesmium erythraeum (strain IMS101), this protein is 1,4-dihydroxy-2-naphthoyl-CoA hydrolase.